We begin with the raw amino-acid sequence, 279 residues long: Putative F-box protein At1g50880 (279 aa).

Residues Ser-19–Gln-69 form the F-box domain.

The chain is Putative F-box protein At1g50880 from Arabidopsis thaliana (Mouse-ear cress).